We begin with the raw amino-acid sequence, 533 residues long: MTQAEIKLCSLLLQEHFGEIVEKIGVHLIRTGSQPLRVIAHDTKASLDQVKKALCVLIHHNLVIYHVHKRGVVEYEAQCSRVLRMLRYPRYIYTTKTLYGDTGELIVEELLLNGKMTMSAVVKKVADRLTETMEDGKTMDYAEVSNAFVRLADTHFVQRCPLVPDTDSSDPGPPPPAPNLVINEKDMYLVPKLSLIGKGKRRRSSDEDAAGEPKAKKPRCTDNEEPTPDDGIYWQVNLDRFHQHFRDQAIVSAVANRMDQTSSEIVRTMLRMSEITTPSGAPFTQPLSSNEIFRSLPVGYNISKQVLDQYLTLLADDPLEFIGKAGDSGGGMYVINLHKALASLSTATLESVIQERFGSRCARIFRLVLQKKHLEQKQVEDFAMIPAKEAKDMLYKMLSENFISLQEIPKTPDHAPSRTFYLYTVNVLSAARMLLHRCYKSIANLIERRQFETKENKRLLEKSQRVEAIMASMQATGAEEVQLQEIEEMITAPERQQLETLKRNVNKLDASEIQVDETIFLLESYIESTMKRQ.

The tract at residues 161–183 is disordered; the sequence is PLVPDTDSSDPGPPPPAPNLVIN. Serine 194 is subject to Phosphoserine. The disordered stretch occupies residues 197 to 228; that stretch reads GKGKRRRSSDEDAAGEPKAKKPRCTDNEEPTP. Basic and acidic residues predominate over residues 211–222; sequence GEPKAKKPRCTD.

It belongs to the eukaryotic RPC3/POLR3C RNA polymerase subunit family. As to quaternary structure, component of the RNA polymerase III complex consisting of 17 subunits: a ten-subunit horseshoe-shaped catalytic core composed of POLR3A/RPC1, POLR3B/RPC2, POLR1C/RPAC1, POLR1D/RPAC2, POLR3K/RPC10, POLR2E/RPABC1, POLR2F/RPABC2, POLR2H/RPABC3, POLR2K/RPABC4 and POLR2L/RPABC5; a mobile stalk composed of two subunits POLR3H/RPC8 and CRCP/RPC9, protruding from the core and functioning primarily in transcription initiation; and additional subunits homologous to general transcription factors of the RNA polymerase II machinery, POLR3C/RPC3-POLR3F/RPC6-POLR3G/RPC7 heterotrimer required for transcription initiation and POLR3D/RPC4-POLR3E/RPC5 heterodimer involved in both transcription initiation and termination. Directly interacts with POLR3G/RPC7 and POLR3GL. Directly interacts with POLR3F/RPC6. Interacts with GTF3C4. As part of the RNA polymerase III complex, interacts with PKP2.

The protein localises to the nucleus. DNA-dependent RNA polymerase catalyzes the transcription of DNA into RNA using the four ribonucleoside triphosphates as substrates. Specific peripheric component of RNA polymerase III (Pol III) which synthesizes small non-coding RNAs including 5S rRNA, snRNAs, tRNAs and miRNAs from at least 500 distinct genomic loci. Part of POLR3C/RPC3-POLR3F/RPC6-POLR3G/RPC7 heterotrimer, coordinates the dynamics of Pol III stalk and clamp modules during the transition from apo to elongation state. Pol III plays a key role in sensing and limiting infection by intracellular bacteria and DNA viruses. Acts as a nuclear and cytosolic DNA sensor involved in innate immune response. Can sense non-self dsDNA that serves as template for transcription into dsRNA. The non-self RNA polymerase III transcripts, such as Epstein-Barr virus-encoded RNAs (EBERs) induce type I interferon and NF-kappa-B through the RIG-I pathway. Preferentially binds single-stranded DNA (ssDNA) in a sequence-independent manner. This is DNA-directed RNA polymerase III subunit RPC3 from Rattus norvegicus (Rat).